The chain runs to 739 residues: Gamma-tubulin complex component 4 homolog (739 aa).

The protein belongs to the TUBGCP family.

Its subcellular location is the cytoplasm. The protein localises to the cytoskeleton. It is found in the microtubule organizing center. Gamma-tubulin complex is necessary for microtubule nucleation at the microtubule organizing centers (MTOCs). In Medicago truncatula (Barrel medic), this protein is Gamma-tubulin complex component 4 homolog (85P).